The sequence spans 319 residues: Acetyl esterase (319 aa).

The Involved in the stabilization of the negatively charged intermediate by the formation of the oxyanion hole signature appears at 91–93 (HGG). Residues S165, D262, and H292 contribute to the active site.

This sequence belongs to the 'GDXG' lipolytic enzyme family. Homodimer. Interacts with MalT and MelA.

It localises to the cytoplasm. Functionally, displays esterase activity towards short chain fatty esters (acyl chain length of up to 8 carbons). Able to hydrolyze triacetylglycerol (triacetin) and tributyrylglycerol (tributyrin), but not trioleylglycerol (triolein) or cholesterol oleate. Negatively regulates MalT activity by antagonizing maltotriose binding. Inhibits MelA galactosidase activity. In Shigella boydii serotype 4 (strain Sb227), this protein is Acetyl esterase.